We begin with the raw amino-acid sequence, 502 residues long: Tryptophan decarboxylase TDC1 (502 aa).

Residues 1–18 (MGSLDSNYDTESPASVGQ) show a composition bias toward polar residues. A disordered region spans residues 1–21 (MGSLDSNYDTESPASVGQFNP). Lys319 is modified (N6-(pyridoxal phosphate)lysine).

The protein belongs to the group II decarboxylase family. The cofactor is pyridoxal 5'-phosphate. In terms of tissue distribution, highly expressed in apex. Expressed in young stem and bark tissues. Expressed at low levels in leaves, fruits and seeds.

It carries out the reaction L-tryptophan + H(+) = tryptamine + CO2. Its function is as follows. Involved in the biosynthesis of tryptamine. Supplies tryptamine for the indole moiety of camptothecin (CPT), an anti-cancer monoterpene alkaloid. Represents a key step in monoterpene indole alkaloid biosynthesis. Is specific for tryptophan, and inactive against tyrosine, phenylalanine and 3,4-dihydroxyphenylalanine (dopa). This is Tryptophan decarboxylase TDC1 from Camptotheca acuminata (Happy tree).